A 407-amino-acid chain; its full sequence is Phosphopentomutase (407 aa).

D10, D306, H311, D347, H348, and H359 together coordinate Mn(2+).

This sequence belongs to the phosphopentomutase family. It depends on Mn(2+) as a cofactor.

Its subcellular location is the cytoplasm. It carries out the reaction 2-deoxy-alpha-D-ribose 1-phosphate = 2-deoxy-D-ribose 5-phosphate. The enzyme catalyses alpha-D-ribose 1-phosphate = D-ribose 5-phosphate. It participates in carbohydrate degradation; 2-deoxy-D-ribose 1-phosphate degradation; D-glyceraldehyde 3-phosphate and acetaldehyde from 2-deoxy-alpha-D-ribose 1-phosphate: step 1/2. Functionally, isomerase that catalyzes the conversion of deoxy-ribose 1-phosphate (dRib-1-P) and ribose 1-phosphate (Rib-1-P) to deoxy-ribose 5-phosphate (dRib-5-P) and ribose 5-phosphate (Rib-5-P), respectively. This is Phosphopentomutase from Buchnera aphidicola subsp. Acyrthosiphon pisum (strain APS) (Acyrthosiphon pisum symbiotic bacterium).